The sequence spans 254 residues: Geranylgeranylglyceryl phosphate synthase (254 aa).

Mg(2+) contacts are provided by Asp28 and Ser57. Residues 176-182 (YLEAGSG), 207-208 (GG), and 229-230 (GT) each bind sn-glycerol 1-phosphate.

It belongs to the GGGP/HepGP synthase family. Group II subfamily. It depends on Mg(2+) as a cofactor.

The protein resides in the cytoplasm. The catalysed reaction is sn-glycerol 1-phosphate + (2E,6E,10E)-geranylgeranyl diphosphate = sn-3-O-(geranylgeranyl)glycerol 1-phosphate + diphosphate. It participates in membrane lipid metabolism; glycerophospholipid metabolism. Its function is as follows. Prenyltransferase that catalyzes the transfer of the geranylgeranyl moiety of geranylgeranyl diphosphate (GGPP) to the C3 hydroxyl of sn-glycerol-1-phosphate (G1P). This reaction is the first ether-bond-formation step in the biosynthesis of archaeal membrane lipids. The chain is Geranylgeranylglyceryl phosphate synthase from Pyrococcus horikoshii (strain ATCC 700860 / DSM 12428 / JCM 9974 / NBRC 100139 / OT-3).